Reading from the N-terminus, the 204-residue chain is Acyl-homoserine-lactone synthase (204 aa).

This sequence belongs to the autoinducer synthase family.

The catalysed reaction is a fatty acyl-[ACP] + S-adenosyl-L-methionine = an N-acyl-L-homoserine lactone + S-methyl-5'-thioadenosine + holo-[ACP] + H(+). Its function is as follows. Required for the synthesis of acyl-HSL autoinducers that bind to SolR. The sequence is that of Acyl-homoserine-lactone synthase (solI) from Ralstonia solanacearum (Pseudomonas solanacearum).